A 213-amino-acid polypeptide reads, in one-letter code: A-type ATP synthase subunit D (213 aa).

This sequence belongs to the V-ATPase D subunit family. In terms of assembly, has multiple subunits with at least A(3), B(3), C, D, E, F, H, I and proteolipid K(x).

It is found in the cell membrane. Its function is as follows. Component of the A-type ATP synthase that produces ATP from ADP in the presence of a proton gradient across the membrane. The chain is A-type ATP synthase subunit D from Saccharolobus islandicus (strain L.S.2.15 / Lassen #1) (Sulfolobus islandicus).